Reading from the N-terminus, the 495-residue chain is Cobyric acid synthase (495 aa).

The GATase cobBQ-type domain occupies 249–442; that stretch reads KFIVKVPVVT…LHGVFDEPEA (194 aa). Cys-330 serves as the catalytic Nucleophile. Residue His-434 is part of the active site.

Belongs to the CobB/CobQ family. CobQ subfamily.

The protein operates within cofactor biosynthesis; adenosylcobalamin biosynthesis. Catalyzes amidations at positions B, D, E, and G on adenosylcobyrinic A,C-diamide. NH(2) groups are provided by glutamine, and one molecule of ATP is hydrogenolyzed for each amidation. The chain is Cobyric acid synthase from Aliivibrio fischeri (strain ATCC 700601 / ES114) (Vibrio fischeri).